The following is a 210-amino-acid chain: Na(+)-translocating NADH-quinone reductase subunit D (210 aa).

5 helical membrane-spanning segments follow: residues 42–62, 72–92, 103–123, 131–151, and 178–198; these read FVMT…VSLI, IIVQ…VLKA, VFVG…AFAM, LIDG…VGFF, and NGLM…IWVI.

The protein belongs to the NqrDE/RnfAE family. As to quaternary structure, composed of six subunits; NqrA, NqrB, NqrC, NqrD, NqrE and NqrF.

Its subcellular location is the cell inner membrane. The enzyme catalyses a ubiquinone + n Na(+)(in) + NADH + H(+) = a ubiquinol + n Na(+)(out) + NAD(+). In terms of biological role, NQR complex catalyzes the reduction of ubiquinone-1 to ubiquinol by two successive reactions, coupled with the transport of Na(+) ions from the cytoplasm to the periplasm. NqrA to NqrE are probably involved in the second step, the conversion of ubisemiquinone to ubiquinol. This Vibrio parahaemolyticus serotype O3:K6 (strain RIMD 2210633) protein is Na(+)-translocating NADH-quinone reductase subunit D.